The following is a 324-amino-acid chain: Polycomb complex protein BMI-1 (324 aa).

The RING-type zinc-finger motif lies at 18–57 (CVLCGGYFIDATTIIECLHSFCKTCIVRYLETSKYCPICD). The Nuclear localization signal signature appears at 81–95 (KLVPGLFKNEMKRRR). The interaction with PHC2 stretch occupies residues 160-180 (RYLRCPAAMTVMHLRKFLRSK). The tract at residues 162-226 (LRCPAAMTVM…GPLPLKYRVR (65 aa)) is interaction with E4F1. The tract at residues 232–324 (MKMSHQRDGL…LNGSSATSSG (93 aa)) is disordered. Low complexity predominate over residues 264 to 276 (PSTSSCLPSPSTP). Over residues 277–307 (VQSPHPQFPHISSTMNGTSNSPSANHQSSFA) the composition is skewed to polar residues. Positions 313-324 (SSLNGSSATSSG) are enriched in low complexity.

As to quaternary structure, component of a PRC1-like complex. Identified in a PRC1-like HPRC-H complex with CBX2, CBX4, CBX8, PHC1, PHC2, PHC3, RING1 and RNF2. Interacts with RNF2/RING2. Interacts with RING1. Part of a complex that contains RNF2, UB2D3 and BMI1, where RNF2 and BMI1 form a tight heterodimer, and UB2D3 interacts only with RNF2. The complex composed of RNF2, UB2D3 and BMI1 binds nucleosomes, and has activity only with nucleosomal histone H2A. Interacts with CBX7 and CBX8. Interacts with SPOP. Part of a complex consisting of BMI1, CUL3 and SPOP. Interacts with E4F1. Interacts with PHC2. Interacts with zinc finger protein ZNF277. May be part of a complex including at least ZNF277, BMI1 and RNF2/RING2. May be polyubiquitinated; which does not lead to proteasomal degradation. Monoubiquitinated. As to expression, detected in most organs with high expression levels in thymus, heart, brain and testis.

It localises to the nucleus. The protein localises to the cytoplasm. Its function is as follows. Component of a Polycomb group (PcG) multiprotein PRC1-like complex, a complex class required to maintain the transcriptionally repressive state of many genes, including Hox genes, throughout development. PcG PRC1 complex acts via chromatin remodeling and modification of histones; it mediates monoubiquitination of histone H2A 'Lys-119', rendering chromatin heritably changed in its expressibility. The complex composed of RNF2, UB2D3 and BMI1 binds nucleosomes, and has activity only with nucleosomal histone H2A. In the PRC1-like complex, regulates the E3 ubiquitin-protein ligase activity of RNF2/RING2. The polypeptide is Polycomb complex protein BMI-1 (Bmi1) (Mus musculus (Mouse)).